A 362-amino-acid chain; its full sequence is Bifunctional nitrilase/nitrile hydratase NIT4 (362 aa).

The CN hydrolase domain occupies 31–307 (VRATVVQAST…EALITADLDL (277 aa)). Glu71 (proton acceptor) is an active-site residue. Lys162 (proton donor) is an active-site residue. Residue Cys196 is the Nucleophile of the active site.

The protein belongs to the carbon-nitrogen hydrolase superfamily. Nitrilase family.

It catalyses the reaction a nitrile + 2 H2O = a carboxylate + NH4(+). The catalysed reaction is 3-cyano-L-alanine + 2 H2O = L-aspartate + NH4(+). In terms of biological role, highly specific for beta-cyano-L-alanine (Ala(CN)). Low activity with 3-phenylpropionitrile (PPN). Not associated with auxin production but may be involved in cyanide detoxification. In Oryza sativa subsp. japonica (Rice), this protein is Bifunctional nitrilase/nitrile hydratase NIT4 (NIT4).